The chain runs to 68 residues: uncharacterized protein (68 aa).

This is an uncharacterized protein from Invertebrate iridescent virus 3 (IIV-3).